The primary structure comprises 273 residues: Dermonecrotic toxin LapSicTox-alphaIB2 (273 aa).

H5 is an active-site residue. Residues E25 and D27 each coordinate Mg(2+). Residue H41 is the Nucleophile of the active site. 2 disulfide bridges follow: C45-C51 and C47-C190. Position 85 (D85) interacts with Mg(2+). N250 carries N-linked (GlcNAc...) asparagine glycosylation.

The protein belongs to the arthropod phospholipase D family. Class II subfamily. Requires Mg(2+) as cofactor. In terms of tissue distribution, expressed by the venom gland.

It localises to the secreted. It catalyses the reaction an N-(acyl)-sphingosylphosphocholine = an N-(acyl)-sphingosyl-1,3-cyclic phosphate + choline. The catalysed reaction is an N-(acyl)-sphingosylphosphoethanolamine = an N-(acyl)-sphingosyl-1,3-cyclic phosphate + ethanolamine. The enzyme catalyses a 1-acyl-sn-glycero-3-phosphocholine = a 1-acyl-sn-glycero-2,3-cyclic phosphate + choline. It carries out the reaction a 1-acyl-sn-glycero-3-phosphoethanolamine = a 1-acyl-sn-glycero-2,3-cyclic phosphate + ethanolamine. Functionally, dermonecrotic toxins cleave the phosphodiester linkage between the phosphate and headgroup of certain phospholipids (sphingolipid and lysolipid substrates), forming an alcohol (often choline) and a cyclic phosphate. This toxin acts on sphingomyelin (SM). It may also act on ceramide phosphoethanolamine (CPE), lysophosphatidylcholine (LPC) and lysophosphatidylethanolamine (LPE), but not on lysophosphatidylserine (LPS), and lysophosphatidylglycerol (LPG). It acts by transphosphatidylation, releasing exclusively cyclic phosphate products as second products. Induces dermonecrosis, hemolysis, increased vascular permeability, edema, inflammatory response, and platelet aggregation. This Loxosceles apachea (Apache recluse spider) protein is Dermonecrotic toxin LapSicTox-alphaIB2.